Here is a 160-residue protein sequence, read N- to C-terminus: Putative pre-16S rRNA nuclease (160 aa).

This sequence belongs to the YqgF nuclease family.

Its subcellular location is the cytoplasm. Its function is as follows. Could be a nuclease involved in processing of the 5'-end of pre-16S rRNA. The polypeptide is Putative pre-16S rRNA nuclease (Gluconobacter oxydans (strain 621H) (Gluconobacter suboxydans)).